We begin with the raw amino-acid sequence, 234 residues long: Enterobactin synthase component D (234 aa).

The Mg(2+) site is built by aspartate 107, glutamate 109, and glutamate 152.

This sequence belongs to the P-Pant transferase superfamily. EntD family. EntB, EntD, EntE, and EntF form a multienzyme complex called enterobactin synthase. Requires Mg(2+) as cofactor.

Its subcellular location is the membrane. It carries out the reaction apo-[aryl-carrier protein] + CoA = holo-[aryl-carrier protein] + adenosine 3',5'-bisphosphate + H(+). The enzyme catalyses apo-[peptidyl-carrier protein] + CoA = holo-[peptidyl-carrier protein] + adenosine 3',5'-bisphosphate + H(+). It functions in the pathway siderophore biosynthesis; enterobactin biosynthesis. Functionally, involved in the biosynthesis of the siderophore enterobactin (enterochelin), which is a macrocyclic trimeric lactone of N-(2,3-dihydroxybenzoyl)-serine. The serine trilactone serves as a scaffolding for the three catechol functionalities that provide hexadentate coordination for the tightly ligated iron(2+) atoms. Plays an essential role in the assembly of the enterobactin by catalyzing the transfer of the 4'-phosphopantetheine (Ppant) moiety from coenzyme A to the apo-domains of both EntB (ArCP domain) and EntF (PCP domain) to yield their holo-forms which make them competent for the activation of 2,3-dihydroxybenzoate (DHB) and L-serine, respectively. This is Enterobactin synthase component D from Salmonella typhi.